Reading from the N-terminus, the 367-residue chain is Regulator of fusion ref-1 (367 aa).

Residues 1-10 (MVLISTPPPA) show a composition bias toward pro residues. Residues 1-24 (MVLISTPPPAYAHNRKTSQEKKRR) are disordered. The tract at residues 11-24 (YAHNRKTSQEKKRR) is basic motif 1. A bHLH 1 domain is found at 11–63 (YAHNRKTSQEKKRRDEINAKIKELQLLIQNESDNEKMTQGDVLNRAVEVVSRM). The tract at residues 25-63 (DEINAKIKELQLLIQNESDNEKMTQGDVLNRAVEVVSRM) is helix-loop-helix motif 1. Disordered stretches follow at residues 133–177 (RSES…RRDR) and 313–367 (ATSP…RPWE). Positions 141–157 (SSMSYRSQSSSPSTSES) are enriched in low complexity. Residues 161–177 (IDRKEVKKNREQDRRDR) are compositionally biased toward basic and acidic residues. Positions 162-175 (DRKEVKKNREQDRR) are basic motif 2. The 58-residue stretch at 162 to 219 (DRKEVKKNREQDRRDRQGEAFDALKNFIIENKLMTSHQVEKMQRLNTLDIIIAYIQNK) folds into the bHLH 2 domain. The interval 176–219 (DRQGEAFDALKNFIIENKLMTSHQVEKMQRLNTLDIIIAYIQNK) is helix-loop-helix motif 2. Low complexity predominate over residues 313–354 (ATSPKSQQSPSYSLDSPPPSSDTSSSSIETPSTPNENSNSNP). Residues 356–367 (ASRKSKLFRPWE) are compositionally biased toward basic residues.

In terms of assembly, interacts with unc-37.

It localises to the nucleus. Probable transcription factor. Binds 5'-TGCCACGTGTCCA-3' in vitro, probably via the E-box motif 5'-CA[TC][AG]TG-3'. Acts in embryonic development in a Notch-dependent manner, perhaps as a direct target of transcriptional regulator lag-1 in the Notch signaling pathway. Also acts in embryonic development in a Notch-independent manner. Plays a role in both Notch-dependent and -independent pathways in the execution of neuronal lineage decisions in the embryo. Also involved in regulating cell fate leading to formation of neuronal structures known as postdeirids. Involved in the pattern of cell fusion with a large syncytium known as hyp-7, during larval development, in hermaphrodites. Plays a role in regulating the activity of homeobox protein mab-5 in Pn.p cells. The sequence is that of Regulator of fusion ref-1 from Caenorhabditis elegans.